We begin with the raw amino-acid sequence, 430 residues long: Tektin-2 (430 aa).

Coiled-coil stretches lie at residues 75-162 (KEML…FQHL) and 226-380 (KNRA…IACK).

This sequence belongs to the tektin family. In terms of assembly, microtubule inner protein component of sperm flagellar doublet microtubules. May interact with CCDC172. In terms of processing, tyrosine phosphorylated. Ubiquitinated, leading to its degradation. Deubiquitinated by USP16, promoting its stability.

The protein resides in the cytoplasm. It localises to the cytoskeleton. Its subcellular location is the cilium axoneme. It is found in the flagellum axoneme. The protein localises to the microtubule organizing center. In terms of biological role, microtubule inner protein (MIP) part of the dynein-decorated doublet microtubules (DMTs) in cilia and flagellar axoneme. Plays a key role in the assembly or attachment of the inner dynein arm to microtubules in sperm flagella and tracheal cilia. Forms filamentous polymers in the walls of ciliary and flagellar microtubules. The protein is Tektin-2 (Tekt2) of Rattus norvegicus (Rat).